The primary structure comprises 94 residues: Mitochondrial import receptor subunit TOM9-1 (94 aa).

Residues Met1–Lys48 lie on the Cytoplasmic side of the membrane. A helical transmembrane segment spans residues Ala49–Leu66. The Mitochondrial intermembrane portion of the chain corresponds to Glu67–Leu94.

This sequence belongs to the Tom22 family. As to quaternary structure, forms part of the preprotein translocase complex of the outer mitochondrial membrane (TOM complex) which consists of at least 6 different proteins (TOM5, TOM6, TOM7, TOM20, TOM22/TOM9 and TOM40). Expressed in roots, flowers, young cotyledons and leaves.

It localises to the mitochondrion outer membrane. In terms of biological role, central component of the receptor complex responsible for the recognition and translocation of cytosolically synthesized mitochondrial preproteins. Together with TOM20 functions as the transit peptide receptor at the surface of the mitochondrion outer membrane and facilitates the movement of preproteins into the translocation pore. This chain is Mitochondrial import receptor subunit TOM9-1 (TOM9-1), found in Arabidopsis thaliana (Mouse-ear cress).